The sequence spans 451 residues: Methylenetetrahydrofolate--tRNA-(uracil-5-)-methyltransferase TrmFO (451 aa).

FAD is bound at residue 10 to 15; the sequence is GGGLAG.

This sequence belongs to the MnmG family. TrmFO subfamily. The cofactor is FAD.

It is found in the cytoplasm. The catalysed reaction is uridine(54) in tRNA + (6R)-5,10-methylene-5,6,7,8-tetrahydrofolate + NADH + H(+) = 5-methyluridine(54) in tRNA + (6S)-5,6,7,8-tetrahydrofolate + NAD(+). The enzyme catalyses uridine(54) in tRNA + (6R)-5,10-methylene-5,6,7,8-tetrahydrofolate + NADPH + H(+) = 5-methyluridine(54) in tRNA + (6S)-5,6,7,8-tetrahydrofolate + NADP(+). Catalyzes the folate-dependent formation of 5-methyl-uridine at position 54 (M-5-U54) in all tRNAs. The sequence is that of Methylenetetrahydrofolate--tRNA-(uracil-5-)-methyltransferase TrmFO from Anaeromyxobacter sp. (strain Fw109-5).